The primary structure comprises 216 residues: Protein Syd (216 aa).

Belongs to the Syd family.

It is found in the cell inner membrane. Its function is as follows. Interacts with the SecY protein in vivo. May bind preferentially to an uncomplexed state of SecY, thus functioning either as a chelating agent for excess SecY in the cell or as a regulatory factor that negatively controls the translocase function. The protein is Protein Syd of Shewanella sp. (strain W3-18-1).